Consider the following 888-residue polypeptide: Valine--tRNA ligase (888 aa).

Residues 43–53 carry the 'HIGH' region motif; that stretch reads PFTSGTLHLGH. Positions 534-538 match the 'KMSKS' region motif; the sequence is KMSKS. K537 lines the ATP pocket.

This sequence belongs to the class-I aminoacyl-tRNA synthetase family. ValS type 2 subfamily.

The protein resides in the cytoplasm. The catalysed reaction is tRNA(Val) + L-valine + ATP = L-valyl-tRNA(Val) + AMP + diphosphate. In terms of biological role, catalyzes the attachment of valine to tRNA(Val). As ValRS can inadvertently accommodate and process structurally similar amino acids such as threonine, to avoid such errors, it has a 'posttransfer' editing activity that hydrolyzes mischarged Thr-tRNA(Val) in a tRNA-dependent manner. The protein is Valine--tRNA ligase of Thermococcus kodakarensis (strain ATCC BAA-918 / JCM 12380 / KOD1) (Pyrococcus kodakaraensis (strain KOD1)).